The primary structure comprises 594 residues: Protein TRANSPORT INHIBITOR RESPONSE 1 (594 aa).

The F-box domain occupies Lys-3–Ile-50. Lys-74 is a 1D-myo-inositol hexakisphosphate binding site. An interaction with auxin-responsive proteins region spans residues Asp-81–Phe-82. 1D-myo-inositol hexakisphosphate contacts are provided by residues Lys-113–Arg-114 and Arg-344. The tract at residues Pro-347–Val-352 is interaction with auxin-responsive proteins. Arg-401 to Arg-403 contacts 1D-myo-inositol hexakisphosphate. Arg-403 is a binding site for (indol-3-yl)acetate. The interaction with auxin-responsive proteins stretch occupies residues Cys-405–Pro-409. Arg-436 is a binding site for 1D-myo-inositol hexakisphosphate. Ser-438 to Leu-439 is a binding site for (indol-3-yl)acetate. Positions Ala-464 to Phe-465 are interaction with auxin-responsive proteins. 1D-myo-inositol hexakisphosphate-binding positions include Arg-484–Lys-485 and Arg-509.

In terms of assembly, interacts with auxin. Part of a SCF E3 ubiquitin ligase complex SCF(TIR1) composed of SKP1, CUL1, RBX1 and TIR1. SCF(TIR1) interacts with the COP9 signalosome (CSN) complex. Interacts with Aux/IAA proteins (IAA3, IAA7, IAA12 and IAA17) in an auxin-dependent manner. The interaction with IAA3, a negative regulator of auxin responses, is promoted by auxin, but repressed by juglon (5-hydroxy-1,4-naphthoquinone). Interactions with auxin-responsive proteins is inactivated by auxin antagonists. Expressed in roots, stems, leaves and flowers. In adult plants, mostly expressed in floral stigma, anther filaments, abscission zones and vascular tissues.

The protein resides in the nucleus. Its pathway is protein modification; protein ubiquitination. In terms of biological role, auxin receptor that mediates Aux/IAA proteins proteasomal degradation and auxin-regulated transcription. The SCF(TIR1) E3 ubiquitin ligase complex is involved in auxin-mediated signaling pathway that regulate root and hypocotyl growth, lateral root formation, cell elongation, and gravitropism. Appears to allow pericycle cells to overcome G2 arrest prior to lateral root development. Plays a role in ethylene signaling in roots. Confers sensitivity to the virulent bacterial pathogen P.syringae. This is Protein TRANSPORT INHIBITOR RESPONSE 1 (TIR1) from Arabidopsis thaliana (Mouse-ear cress).